Consider the following 470-residue polypeptide: Glutamate--tRNA ligase 2 (470 aa).

Positions 11–21 (PSPTGHLHLGG) match the 'HIGH' region motif. The short motif at 238–242 (KLSKR) is the 'KMSKS' region element. Lys-241 provides a ligand contact to ATP.

Belongs to the class-I aminoacyl-tRNA synthetase family. Glutamate--tRNA ligase type 1 subfamily. As to quaternary structure, monomer.

It localises to the cytoplasm. The enzyme catalyses tRNA(Glu) + L-glutamate + ATP = L-glutamyl-tRNA(Glu) + AMP + diphosphate. Its function is as follows. Catalyzes the attachment of glutamate to tRNA(Glu) in a two-step reaction: glutamate is first activated by ATP to form Glu-AMP and then transferred to the acceptor end of tRNA(Glu). The chain is Glutamate--tRNA ligase 2 from Ehrlichia ruminantium (strain Gardel).